The primary structure comprises 276 residues: MSAATFRGYAPAKVNLALHVTGRRVDGYHELDSLVVFAGVGDRLEIAPADALSLTVTGPRAEGVPDDARNLVWKAADWLAPGRGAAMTLDKHLPHAGGIGGGSADAACALRGLAEIWDVDVPDGAEALGADVPVCLHGQPVRMRGIGDVLDAVPPLPPMWIVLVNAGVEVPTGAVFKAMERVDNPPLPAPAWDGFDSFLVWLERTRNDMESSARSQAPVIGMVLERLRALPGCRFTRMSGSGGTCFGLFETEIAARDAALGLPKHWWVTYAPVLRA.

The active site involves Lys-13. 94 to 104 contacts ATP; that stretch reads PHAGGIGGGSA. Asp-131 is an active-site residue.

The protein belongs to the GHMP kinase family. IspE subfamily.

It catalyses the reaction 4-CDP-2-C-methyl-D-erythritol + ATP = 4-CDP-2-C-methyl-D-erythritol 2-phosphate + ADP + H(+). It functions in the pathway isoprenoid biosynthesis; isopentenyl diphosphate biosynthesis via DXP pathway; isopentenyl diphosphate from 1-deoxy-D-xylulose 5-phosphate: step 3/6. In terms of biological role, catalyzes the phosphorylation of the position 2 hydroxy group of 4-diphosphocytidyl-2C-methyl-D-erythritol. The protein is 4-diphosphocytidyl-2-C-methyl-D-erythritol kinase of Jannaschia sp. (strain CCS1).